The following is a 108-amino-acid chain: ATP-dependent Clp protease adapter protein ClpS (108 aa).

The protein belongs to the ClpS family. As to quaternary structure, binds to the N-terminal domain of the chaperone ClpA.

In terms of biological role, involved in the modulation of the specificity of the ClpAP-mediated ATP-dependent protein degradation. This is ATP-dependent Clp protease adapter protein ClpS from Cupriavidus metallidurans (strain ATCC 43123 / DSM 2839 / NBRC 102507 / CH34) (Ralstonia metallidurans).